Consider the following 233-residue polypeptide: Bcl-2-like protein 1 (233 aa).

A BH4 motif is present at residues 4 to 24 (SNRELVVDFLSYKLSQKGYSW). The disordered stretch occupies residues 28-71 (SDVEENRTEAPEGTESEMETPSAINGNPSWHLADSPAVNGATGH). Residue S49 is modified to Phosphoserine; by PLK3. Phosphoserine; by CDK1 is present on S62. Positions 86–100 (VKQALREAGDEFELR) match the BH3 motif. The BH1 signature appears at 129–148 (ELFRDGVNWGRIVAFFSFGG). A BH2 motif is present at residues 180-195 (PWIQENGGWDTFVELY). Residues 210 to 226 (FNRWFLTGMTVAGVVLL) traverse the membrane as a helical segment.

This sequence belongs to the Bcl-2 family. In terms of assembly, homodimer. Interacts with BCL2L11. Interacts with BAD. Interacts with PGAM5. Interacts with HEBP2. Interacts with p53/TP53 and BBC3; interaction with BBC3 disrupts the interaction with p53/TP53. Interacts with ATP5F1A and ATP5F1B; the interactions mediate the association of isoform Bcl-X(L) with the mitochondrial membrane ATP synthase F(1)F(0) ATP synthase. Interacts with VDAC1. Interacts with BCL2L11 (via BH3). Interacts with RNF183. Interacts with GIMAP3/IAN4 and GIMAP5/IAN5. Interacts with GIMAP5 and HSPA8/HSC70; the interaction between HSPA8 and BCL2L1 is impaired in the absence of GIMAP5. Interacts with isoform 4 of CLU; this interaction releases and activates BAX and promotes cell death. As to quaternary structure, forms heterodimers with BAX, BAK or BCL2; heterodimerization with BAX does not seem to be required for anti-apoptotic activity. Interacts with isoform 1 of SIVA1; the interaction inhibits the anti-apoptotic activity. Interacts with IKZF3. Interacts with RTL10/BOP. Interacts with DNM1L and CLTA; DNM1L and BCL2L1 isoform BCL-X(L) may form a complex in synaptic vesicles that also contains clathrin and MFF. Interacts (via the loop between motifs BH4 and BH3) with NLRP1 (via LRR repeats), but not with NLRP2, NLRP3, NLRP4, PYCARD, nor MEFV. Interacts with BECN1. In terms of processing, proteolytically cleaved by caspases during apoptosis. The cleaved protein, lacking the BH4 motif, has pro-apoptotic activity. Phosphorylated on Ser-62 by CDK1. This phosphorylation is partial in normal mitotic cells, but complete in G2-arrested cells upon DNA-damage, thus promoting subsequent apoptosis probably by triggering caspases-mediated proteolysis. Phosphorylated by PLK3, leading to regulate the G2 checkpoint and progression to cytokinesis during mitosis. Phosphorylation at Ser-49 appears during the S phase and G2, disappears rapidly in early mitosis during prometaphase, metaphase and early anaphase, and re-appears during telophase and cytokinesis. Post-translationally, ubiquitinated by RNF183 during prolonged ER stress, leading to degradation by the proteosome. As to expression, bcl-X(S) is expressed at high levels in cells that undergo a high rate of turnover, such as developing lymphocytes. In contrast, Bcl-X(L) is found in tissues containing long-lived postmitotic cells, such as adult brain.

The protein localises to the mitochondrion inner membrane. Its subcellular location is the mitochondrion outer membrane. It localises to the mitochondrion matrix. It is found in the cytoplasmic vesicle. The protein resides in the secretory vesicle. The protein localises to the synaptic vesicle membrane. Its subcellular location is the cytoplasm. It localises to the cytosol. It is found in the cytoskeleton. The protein resides in the microtubule organizing center. The protein localises to the centrosome. Its subcellular location is the nucleus membrane. Functionally, potent inhibitor of cell death. Inhibits activation of caspases. Appears to regulate cell death by blocking the voltage-dependent anion channel (VDAC) by binding to it and preventing the release of the caspase activator, CYC1, from the mitochondrial membrane. Also acts as a regulator of G2 checkpoint and progression to cytokinesis during mitosis. In terms of biological role, isoform Bcl-X(L) also regulates presynaptic plasticity, including neurotransmitter release and recovery, number of axonal mitochondria as well as size and number of synaptic vesicle clusters. During synaptic stimulation, increases ATP availability from mitochondria through regulation of mitochondrial membrane ATP synthase F(1)F(0) activity and regulates endocytic vesicle retrieval in hippocampal neurons through association with DMN1L and stimulation of its GTPase activity in synaptic vesicles. May attenuate inflammation impairing NLRP1-inflammasome activation, hence CASP1 activation and IL1B release. Its function is as follows. Isoform Bcl-X(S) promotes apoptosis. This Homo sapiens (Human) protein is Bcl-2-like protein 1 (BCL2L1).